Consider the following 401-residue polypeptide: Argininosuccinate synthase (401 aa).

ATP is bound at residue 8–16 (AYSGGLDTS). Tyr-85 provides a ligand contact to L-citrulline. Gly-115 lines the ATP pocket. The L-aspartate site is built by Thr-117, Asn-121, and Asp-122. Asn-121 contributes to the L-citrulline binding site. L-citrulline-binding residues include Arg-125, Ser-173, Glu-258, and Tyr-270.

Belongs to the argininosuccinate synthase family. Type 1 subfamily. In terms of assembly, homotetramer.

The protein localises to the cytoplasm. It carries out the reaction L-citrulline + L-aspartate + ATP = 2-(N(omega)-L-arginino)succinate + AMP + diphosphate + H(+). Its pathway is amino-acid biosynthesis; L-arginine biosynthesis; L-arginine from L-ornithine and carbamoyl phosphate: step 2/3. This Staphylococcus carnosus (strain TM300) protein is Argininosuccinate synthase.